Consider the following 87-residue polypeptide: MSVKIRLARFGAKKRPFYRVVVADSRVARDGRFIELLGFYNPMLPKEHPSFLKVKVDRLKYWLSVGAQPTERISWFIKKGLISTEAA.

Belongs to the bacterial ribosomal protein bS16 family.

The polypeptide is Small ribosomal subunit protein bS16 (Ehrlichia ruminantium (strain Welgevonden)).